We begin with the raw amino-acid sequence, 321 residues long: Protein-L-isoaspartate O-methyltransferase (321 aa).

Residues 21 to 31 (KPAERQREKRI) show a composition bias toward basic and acidic residues. A disordered region spans residues 21 to 65 (KPAERQREKRISSGVNAVSLPTPARTASAERASSTPAPGPGPQRV). The segment covering 41 to 56 (PTPARTASAERASSTP) has biased composition (low complexity). The active site involves serine 153.

Belongs to the methyltransferase superfamily. L-isoaspartyl/D-aspartyl protein methyltransferase family.

Its subcellular location is the cytoplasm. It catalyses the reaction [protein]-L-isoaspartate + S-adenosyl-L-methionine = [protein]-L-isoaspartate alpha-methyl ester + S-adenosyl-L-homocysteine. In terms of biological role, catalyzes the methyl esterification of L-isoaspartyl residues in peptides and proteins that result from spontaneous decomposition of normal L-aspartyl and L-asparaginyl residues. It plays a role in the repair and/or degradation of damaged proteins. The protein is Protein-L-isoaspartate O-methyltransferase of Ralstonia nicotianae (strain ATCC BAA-1114 / GMI1000) (Ralstonia solanacearum).